The primary structure comprises 433 residues: Histone acetyltransferase type B subunit 2 (433 aa).

5 WD repeats span residues 131-171, 184-224, 234-274, 281-321, and 325-365; these read EHPG…LDPT, GHEA…ADSR, HHTQ…TNKA, GHLD…EKVH, and GHND…EEQL. The interaction with the histone H4 N-terminus stretch occupies residues 367 to 371; it reads DDQDD. A WD 6 repeat occupies 382–422; the sequence is GHTNHLADFSWNPNEPWLVASAAEDNLLQIWKVAESIVGKD.

The protein belongs to the WD repeat RBAP46/RBAP48/MSI1 family. Component of the HAT-B complex composed of at least HAT1 and HAT2. The HAT-B complex binds to histone H4 tail.

The protein localises to the cytoplasm. The protein resides in the nucleus. Regulatory subunit of the histone acetylase B (HAT-B) complex. The complex acetylates 'Lys-12' of histone H4 which is required for telomeric silencing. This chain is Histone acetyltransferase type B subunit 2 (HAT2), found in Gibberella zeae (strain ATCC MYA-4620 / CBS 123657 / FGSC 9075 / NRRL 31084 / PH-1) (Wheat head blight fungus).